A 30-amino-acid polypeptide reads, in one-letter code: Trypsin inhibitor 3 (30 aa).

Gln-1 carries the pyrrolidone carboxylic acid modification. Intrachain disulfides connect Cys-4–Cys-21, Cys-11–Cys-23, and Cys-17–Cys-29.

The protein resides in the secreted. Its function is as follows. Inhibits trypsin; probably participates in a plant defense mechanism. In Momordica cochinchinensis (Spiny bitter cucumber), this protein is Trypsin inhibitor 3.